Reading from the N-terminus, the 224-residue chain is Mammalian ependymin-related protein 1 (224 aa).

Positions 1–37 (MPARAPRRLVQGPRGTWLLGSLWVWVLCGLGMAGSLG) are cleaved as a signal peptide. 3 disulfides stabilise this stretch: C42-C172, C88-C222, and C113-C210. N130 and N182 each carry an N-linked (GlcNAc...) asparagine glycan.

The protein belongs to the ependymin family. As to quaternary structure, homodimer. Post-translationally, N-glycosylated; the glycan contains mannose-6-phosphate moieties. As to expression, detected in brain, small intestine and in soleus, extensor digitorum longus and white gastrocnemius (at protein level). Detected in brain and skeletal muscle, and at lower leavels in heart.

The protein localises to the lysosome lumen. The protein resides in the secreted. In terms of biological role, binds anionic lipids and gangliosides at acidic pH. This chain is Mammalian ependymin-related protein 1 (Epdr1), found in Mus musculus (Mouse).